Consider the following 129-residue polypeptide: MTLEELVKAIEGLTVAELAELVKMLEERFGVSAAAPVMAAMPVAGAAAPSAAAAEEKDSFDVLLKSFGAKKVEVIKVVREITGLGLKEAKDLVEKAGAADAFIKQGVKKEEAEEIKKKITEVGGEVEIK.

It belongs to the bacterial ribosomal protein bL12 family. Homodimer. Part of the ribosomal stalk of the 50S ribosomal subunit. Forms a multimeric L10(L12)X complex, where L10 forms an elongated spine to which 2 to 4 L12 dimers bind in a sequential fashion. Binds GTP-bound translation factors.

Functionally, forms part of the ribosomal stalk which helps the ribosome interact with GTP-bound translation factors. Is thus essential for accurate translation. The chain is Large ribosomal subunit protein bL12 from Fervidobacterium nodosum (strain ATCC 35602 / DSM 5306 / Rt17-B1).